The sequence spans 146 residues: Acidic phospholipase A2 S13-69J (146 aa).

The N-terminal stretch at Met1 to Ala19 is a signal peptide. Residues Ala20–Leu27 constitute a propeptide that is removed on maturation. 7 disulfides stabilise this stretch: Cys38–Cys98, Cys54–Cys145, Cys56–Cys72, Cys71–Cys126, Cys78–Cys119, Cys87–Cys112, and Cys105–Cys117. Positions 55, 57, and 59 each coordinate Ca(2+). Residue His75 is part of the active site. Asp76 provides a ligand contact to Ca(2+). Asp120 is an active-site residue.

The protein belongs to the phospholipase A2 family. Group I subfamily. D49 sub-subfamily. It depends on Ca(2+) as a cofactor. Expressed by the venom gland.

It is found in the secreted. The catalysed reaction is a 1,2-diacyl-sn-glycero-3-phosphocholine + H2O = a 1-acyl-sn-glycero-3-phosphocholine + a fatty acid + H(+). Its function is as follows. Snake venom phospholipase A2 (PLA2) that inhibits collagen-induced platelet aggregation. PLA2 catalyzes the calcium-dependent hydrolysis of the 2-acyl groups in 3-sn-phosphoglycerides. The polypeptide is Acidic phospholipase A2 S13-69J (Austrelaps superbus (Lowland copperhead snake)).